We begin with the raw amino-acid sequence, 159 residues long: Protein-export protein SecB (159 aa).

It belongs to the SecB family. Homotetramer, a dimer of dimers. One homotetramer interacts with 1 SecA dimer.

It is found in the cytoplasm. Its function is as follows. One of the proteins required for the normal export of preproteins out of the cell cytoplasm. It is a molecular chaperone that binds to a subset of precursor proteins, maintaining them in a translocation-competent state. It also specifically binds to its receptor SecA. In Nitrosospira multiformis (strain ATCC 25196 / NCIMB 11849 / C 71), this protein is Protein-export protein SecB.